The following is an 876-amino-acid chain: Dynein regulatory complex subunit 7 (876 aa).

Coiled-coil stretches lie at residues 1 to 33 (MEVL…ERVT) and 258 to 295 (KFEQ…AKPD). The disordered stretch occupies residues 1–40 (MEVLREKVEEEEEAEREEAAERAERTEKLERVTKSAEVSR). Residues 17–40 (EEAAERAERTEKLERVTKSAEVSR) show a composition bias toward basic and acidic residues. The interval 385-412 (SLTEEDEEGLDDDDDDVEDLGKEEEDKS) is disordered. Residues 387-407 (TEEDEEGLDDDDDDVEDLGKE) are compositionally biased toward acidic residues. Coiled coils occupy residues 679–710 (QLKN…EEEE) and 784–809 (QRLI…KKQQ).

It belongs to the DRC7 family. Component of the nexin-dynein regulatory complex (N-DRC). Interacts with TCTE1/DRC5. Interacts with DRC3 and GAS8/DRC4. As to expression, expressed in diplotene and pachytene spermytocytes, and in round and elongating spermatids (at protein level). Strongly expressed in spleen and testis, faintly expressed in kidney, ovary and thymus. In terms of tissue distribution, abundantly expressed in the testis and is weakly expressed in the brain, thymus, lung and ovary. Expressed in ciliated cells.

The protein localises to the cell projection. It localises to the cilium. The protein resides in the flagellum. It is found in the cytoplasm. Its subcellular location is the cytoskeleton. The protein localises to the cilium axoneme. It localises to the flagellum axoneme. Component of the nexin-dynein regulatory complex (N-DRC) a key regulator of ciliary/flagellar motility which maintains the alignment and integrity of the distal axoneme and regulates microtubule sliding in motile axonemes. Essential for male fertility, sperm head morphogenesis and sperm flagellum formation. Not required for ciliogenesis in the brain and trachea. The chain is Dynein regulatory complex subunit 7 (Drc7) from Mus musculus (Mouse).